The following is a 417-amino-acid chain: Pre-mRNA-splicing factor PRP46 (417 aa).

WD repeat units lie at residues 119 to 159 (AHQG…LKAT), 162 to 201 (GHIM…SSSG), 209 to 248 (GHVG…EIMV), 251 to 290 (GHRS…TQLA), 293 to 334 (HHSK…NEFG), 337 to 376 (GENK…LLQS), and 385 to 417 (STES…WGEE).

This sequence belongs to the WD repeat PRL1/PRL2 family. In terms of assembly, associated with the spliceosome.

It localises to the cytoplasm. The protein resides in the nucleus. In terms of biological role, involved in pre-mRNA splicing and required for cell cycle progression at G2/M. In Debaryomyces hansenii (strain ATCC 36239 / CBS 767 / BCRC 21394 / JCM 1990 / NBRC 0083 / IGC 2968) (Yeast), this protein is Pre-mRNA-splicing factor PRP46 (PRP46).